A 954-amino-acid chain; its full sequence is Glycine dehydrogenase (decarboxylating) (954 aa).

K704 carries the N6-(pyridoxal phosphate)lysine modification.

It belongs to the GcvP family. In terms of assembly, the glycine cleavage system is composed of four proteins: P, T, L and H. It depends on pyridoxal 5'-phosphate as a cofactor.

It carries out the reaction N(6)-[(R)-lipoyl]-L-lysyl-[glycine-cleavage complex H protein] + glycine + H(+) = N(6)-[(R)-S(8)-aminomethyldihydrolipoyl]-L-lysyl-[glycine-cleavage complex H protein] + CO2. In terms of biological role, the glycine cleavage system catalyzes the degradation of glycine. The P protein binds the alpha-amino group of glycine through its pyridoxal phosphate cofactor; CO(2) is released and the remaining methylamine moiety is then transferred to the lipoamide cofactor of the H protein. This Rhizobium meliloti (strain 1021) (Ensifer meliloti) protein is Glycine dehydrogenase (decarboxylating).